A 314-amino-acid polypeptide reads, in one-letter code: Olfactory receptor 10A6 (314 aa).

The Extracellular segment spans residues 1–25 (MERQNQSCVVEFILLGFSNYPELQG). The N-linked (GlcNAc...) asparagine glycan is linked to Asn5. Residues 26 to 46 (QLFVAFLVIYLVTLIGNAIII) traverse the membrane as a helical segment. Topologically, residues 47–54 (VIVSLDQS) are cytoplasmic. Residues 55 to 75 (LHVPMYLFLLNLSVVDLSFSA) traverse the membrane as a helical segment. The Extracellular portion of the chain corresponds to 76-99 (VIMPEMLVVLSTEKTTISFGGCFA). Cys97 and Cys189 are oxidised to a cystine. The helical transmembrane segment at 100–120 (QMYFILLFGGAECFLLGAMAY) threads the bilayer. The Cytoplasmic segment spans residues 121–139 (DRFAAICHPLNYQMIMNKG). Residues 140–160 (VFMKLIIFSWALGFMLGTVQT) form a helical membrane-spanning segment. Residues 161–197 (SWVSSFPFCGLNEINHISCETPAVLELACADTFLFEI) are Extracellular-facing. Residues 198–217 (YAFTGTFLIILVPFLLILLS) traverse the membrane as a helical segment. Residues 218–237 (YIRVLFAILKMPSTTGRQKA) are Cytoplasmic-facing. A helical membrane pass occupies residues 238–258 (FSTCAAHLTSVTLFYGTASMT). Over 259–271 (YLQPKSGYSPETK) the chain is Extracellular. Residues 272-292 (KVMSLSYSLLTPLLNLLIYSL) form a helical membrane-spanning segment. Topologically, residues 293–314 (RNSEMKRALMKLWRRRVVLHTI) are cytoplasmic.

It belongs to the G-protein coupled receptor 1 family.

It is found in the cell membrane. Odorant receptor. The chain is Olfactory receptor 10A6 (OR10A6) from Homo sapiens (Human).